Reading from the N-terminus, the 121-residue chain is N-alpha-acetyltransferase 38, NatC auxiliary subunit (121 aa).

One can recognise a Sm domain in the interval 40-113; the sequence is PGRRKLQKWL…IVSLSIDEPD (74 aa).

Belongs to the snRNP Sm proteins family. Component of the N-terminal acetyltransferase C (NatC) complex, which is composed of Naa35, Sbat/Naa38 and Naa30A. Interacts with Smn and Hez; along with Hez and Vlet, may form an accessory subcomplex involved in SMN complex function.

Its subcellular location is the cytoplasm. It localises to the nucleus. Functionally, auxiliary component of the N-terminal acetyltransferase C (NatC) complex which catalyzes acetylation of N-terminal methionine residues. May have an accessory function in the survival motor neuron (SMN) complex. In Drosophila melanogaster (Fruit fly), this protein is N-alpha-acetyltransferase 38, NatC auxiliary subunit.